We begin with the raw amino-acid sequence, 124 residues long: UPF0231 protein SO_3983 (124 aa).

The protein belongs to the UPF0231 family.

In Shewanella oneidensis (strain ATCC 700550 / JCM 31522 / CIP 106686 / LMG 19005 / NCIMB 14063 / MR-1), this protein is UPF0231 protein SO_3983.